A 623-amino-acid chain; its full sequence is Kelch-like protein diablo (623 aa).

The tract at residues 1 to 54 is disordered; the sequence is MGDLPGSGSTAQPRDAAVTGTGGNSTAGGGSSVGSTAVDRPPSPARLSHTSEKH. A Phosphothreonine modification is found at threonine 19. The span at 20 to 32 shows a compositional bias: gly residues; sequence GTGGNSTAGGGSS. The 68-residue stretch at 72–139 folds into the BTB domain; it reads CDVVLNVGGR…CYTAHIIVEE (68 aa). One can recognise a BACK domain in the interval 174 to 276; sequence CLGIRAFADT…SPKFLVGTVG (103 aa). 6 Kelch repeats span residues 323 to 369, 371 to 417, 418 to 464, 466 to 511, 513 to 558, and 559 to 605; these read VLFA…VLND, LYAV…VLDG, FLYA…VLGG, LYAI…VFNN, IYAV…VVNG, and QLYA…VMRA.

The protein operates within protein modification; protein ubiquitination. Probable substrate-specific adapter of an E3 ubiquitin-protein ligase complex which mediates the ubiquitination and subsequent proteasomal degradation of target proteins. May have a role in synapse differentiation and growth. In Drosophila melanogaster (Fruit fly), this protein is Kelch-like protein diablo.